The chain runs to 396 residues: MTVSEGIARIQAFRKQVPLVEKNENITFFNLSFQPPMNSIVANTINEYVDWGLYNPNPKPLWQQKAEETRELVAKYLNASSSDSIAFTRDTTEGLNLFQRSMHFQPGDNVVLLDGEHPNHGFGWISLQEAGLEVRLIPSKDIYYADASTFEPYVDEKTKAIGISSVMFHSGQLNNVKDICNKFRPENIHVLVDMTQQVGLSSIDVQELNVSACAFACHKGLSCPTGLGVLYVAPDVLPQLKNVPPIVGAGAIENLDANLLVNLNPIYFSTARRFEHLNKSLITTLCLNNYLSFLMDIGFENIEQYLRELGKSLVDELSKLGVTIIGSKDPKKRSTHSYVAKILNPEWDAFLKNEGVYASQYRDGIRLSLGLYNNAADISRLANTIKKGVLNKIPFN.

An N6-(pyridoxal phosphate)lysine modification is found at K219.

The protein belongs to the class-V pyridoxal-phosphate-dependent aminotransferase family. Requires pyridoxal 5'-phosphate as cofactor.

The protein resides in the cytoplasm. It localises to the nucleus. This is an uncharacterized protein from Schizosaccharomyces pombe (strain 972 / ATCC 24843) (Fission yeast).